Here is a 202-residue protein sequence, read N- to C-terminus: dITP/XTP pyrophosphatase (202 aa).

Residue 7 to 12 (TTNEGK) participates in substrate binding. 2 residues coordinate Mg(2+): Glu-37 and Asp-66. Asp-66 serves as the catalytic Proton acceptor. Residues Ser-67, 155-158 (FGYD), Lys-178, and 183-184 (HR) contribute to the substrate site.

The protein belongs to the HAM1 NTPase family. As to quaternary structure, homodimer. Mg(2+) serves as cofactor.

The catalysed reaction is XTP + H2O = XMP + diphosphate + H(+). It carries out the reaction dITP + H2O = dIMP + diphosphate + H(+). It catalyses the reaction ITP + H2O = IMP + diphosphate + H(+). Functionally, pyrophosphatase that catalyzes the hydrolysis of nucleoside triphosphates to their monophosphate derivatives, with a high preference for the non-canonical purine nucleotides XTP (xanthosine triphosphate), dITP (deoxyinosine triphosphate) and ITP. Seems to function as a house-cleaning enzyme that removes non-canonical purine nucleotides from the nucleotide pool, thus preventing their incorporation into DNA/RNA and avoiding chromosomal lesions. In Aquifex aeolicus (strain VF5), this protein is dITP/XTP pyrophosphatase.